Reading from the N-terminus, the 357-residue chain is DNA replication and repair protein RecF (357 aa).

30–37 is a binding site for ATP; that stretch reads GANGSGKT.

This sequence belongs to the RecF family.

The protein resides in the cytoplasm. The RecF protein is involved in DNA metabolism; it is required for DNA replication and normal SOS inducibility. RecF binds preferentially to single-stranded, linear DNA. It also seems to bind ATP. The protein is DNA replication and repair protein RecF of Shigella boydii serotype 4 (strain Sb227).